Here is a 168-residue protein sequence, read N- to C-terminus: Vasopressin-neurophysin 2-copeptin (168 aa).

A signal peptide spans 1 to 23 (MLARMLNTTLSACFLSLLAFSSA). Cys-24 and Cys-29 are joined by a disulfide. Residue Gly-32 is modified to Glycine amide. Intrachain disulfides connect Cys-45/Cys-89, Cys-48/Cys-62, Cys-56/Cys-79, Cys-63/Cys-69, Cys-96/Cys-108, Cys-102/Cys-120, and Cys-109/Cys-114. Asn-135 is a glycosylation site (N-linked (GlcNAc...) asparagine).

The protein belongs to the vasopressin/oxytocin family. In terms of assembly, interacts with vasopressin receptors V1bR/AVPR1B (Ki=85 pM), V1aR/AVPR1A (Ki=0.6 nM) and V2R/AVPR2 (Ki=4.9 nM). Interacts with oxytocin receptor (OXTR) (Ki=110 nM).

The protein localises to the secreted. Its function is as follows. Neurophysin 2 specifically binds vasopressin. Vasopressin has a direct antidiuretic action on the kidney, it also causes vasoconstriction of the peripheral vessels. Acts by binding to vasopressin receptors (V1bR/AVPR1B, V1aR/AVPR1A, and V2R/AVPR2). The chain is Vasopressin-neurophysin 2-copeptin (Avp) from Mus musculus (Mouse).